Consider the following 277-residue polypeptide: Outer membrane lipoprotein 1 (277 aa).

Residues 1–19 (MSFKKILGVALVSALALTA) form the signal peptide. Cysteine 20 carries N-palmitoyl cysteine lipidation. Cysteine 20 is lipidated: S-diacylglycerol cysteine.

It belongs to the NlpA lipoprotein family.

Its subcellular location is the cell outer membrane. The polypeptide is Outer membrane lipoprotein 1 (plpA) (Mannheimia haemolytica (Pasteurella haemolytica)).